We begin with the raw amino-acid sequence, 470 residues long: Neuraminidase (470 aa).

The Intravirion portion of the chain corresponds to 1-14; that stretch reads MNPNQKIITIGSIS. Residues 11-32 form an involved in apical transport and lipid raft association region; that stretch reads GSISLGLVVFNVLLHVVSIIVT. The chain crosses the membrane as a helical span at residues 15–35; it reads LGLVVFNVLLHVVSIIVTVLI. The hypervariable stalk region stretch occupies residues 32 to 86; it reads TVLILGRGGNNGICNETVVREYNETVRIEKVTQWHNTSVVEYMPYWNEGTYMNNT. The Virion surface portion of the chain corresponds to 36–470; that stretch reads LGRGGNNGIC…AILPFDIDKM (435 aa). N-linked (GlcNAc...) asparagine; by host glycosylation is found at N46, N54, N67, and N84. The segment at 89-470 is head of neuraminidase; the sequence is ICDVKGFAPF…AILPFDIDKM (382 aa). 8 cysteine pairs are disulfide-bonded: C90-C417, C122-C127, C182-C229, C231-C236, C277-C290, C279-C288, C316-C335, and C421-C446. Residue R116 participates in substrate binding. The N-linked (GlcNAc...) asparagine; by host glycan is linked to N144. The Proton donor/acceptor role is filled by D149. R150 is a binding site for substrate. 275 to 276 contacts substrate; the sequence is EE. Position 291 (R291) interacts with substrate. D292 lines the Ca(2+) pocket. N-linked (GlcNAc...) asparagine; by host glycosylation occurs at N293. G296 and D322 together coordinate Ca(2+). R368 contacts substrate. N398 carries an N-linked (GlcNAc...) asparagine; by host glycan. Y402 (nucleophile) is an active-site residue.

Belongs to the glycosyl hydrolase 34 family. In terms of assembly, homotetramer. Ca(2+) is required as a cofactor. N-glycosylated.

It localises to the virion membrane. It is found in the host apical cell membrane. The enzyme catalyses Hydrolysis of alpha-(2-&gt;3)-, alpha-(2-&gt;6)-, alpha-(2-&gt;8)- glycosidic linkages of terminal sialic acid residues in oligosaccharides, glycoproteins, glycolipids, colominic acid and synthetic substrates.. With respect to regulation, inhibited by the neuraminidase inhibitors zanamivir (Relenza) and oseltamivir (Tamiflu). These drugs interfere with the release of progeny virus from infected cells and are effective against all influenza strains. Resistance to neuraminidase inhibitors is quite rare. Its function is as follows. Catalyzes the removal of terminal sialic acid residues from viral and cellular glycoconjugates. Cleaves off the terminal sialic acids on the glycosylated HA during virus budding to facilitate virus release. Additionally helps virus spread through the circulation by further removing sialic acids from the cell surface. These cleavages prevent self-aggregation and ensure the efficient spread of the progeny virus from cell to cell. Otherwise, infection would be limited to one round of replication. Described as a receptor-destroying enzyme because it cleaves a terminal sialic acid from the cellular receptors. May facilitate viral invasion of the upper airways by cleaving the sialic acid moieties on the mucin of the airway epithelial cells. Likely to plays a role in the budding process through its association with lipid rafts during intracellular transport. May additionally display a raft-association independent effect on budding. Plays a role in the determination of host range restriction on replication and virulence. Sialidase activity in late endosome/lysosome traffic seems to enhance virus replication. This Aves (Horse) protein is Neuraminidase.